The chain runs to 205 residues: Inactive ribonuclease-like protein 9 (205 aa).

An N-terminal signal peptide occupies residues 1–24; that stretch reads MMLITTHSLLLLLLLLQLLQPLQF. Intrachain disulfides connect Cys97–Cys152, Cys115–Cys167, and Cys122–Cys129. Residues Asn130 and Asn142 are each glycosylated (N-linked (GlcNAc...) asparagine).

Belongs to the pancreatic ribonuclease family.

It localises to the secreted. In terms of biological role, does not exhibit any ribonuclease activity. This is Inactive ribonuclease-like protein 9 (RNASE9) from Cebus capucinus (White-faced sapajou).